Here is a 414-residue protein sequence, read N- to C-terminus: Secernin-1 (414 aa).

A2 is subject to N-acetylalanine. C9 is a catalytic residue.

The protein belongs to the peptidase C69 family. Secernin subfamily.

Its subcellular location is the cytoplasm. Regulates exocytosis in mast cells. Increases both the extent of secretion and the sensitivity of mast cells to stimulation with calcium. This chain is Secernin-1 (SCRN1), found in Homo sapiens (Human).